A 373-amino-acid polypeptide reads, in one-letter code: Flagellar P-ring protein (373 aa).

The first 28 residues, 1-28 (MPSVSAVILKLAAAALSALLLSGVAANA), serve as a signal peptide directing secretion.

Belongs to the FlgI family. In terms of assembly, the basal body constitutes a major portion of the flagellar organelle and consists of four rings (L,P,S, and M) mounted on a central rod.

The protein resides in the periplasm. It is found in the bacterial flagellum basal body. In terms of biological role, assembles around the rod to form the L-ring and probably protects the motor/basal body from shearing forces during rotation. In Rhodopseudomonas palustris (strain HaA2), this protein is Flagellar P-ring protein.